A 191-amino-acid chain; its full sequence is Elongation factor P (191 aa).

Belongs to the elongation factor P family.

It localises to the cytoplasm. It functions in the pathway protein biosynthesis; polypeptide chain elongation. In terms of biological role, involved in peptide bond synthesis. Stimulates efficient translation and peptide-bond synthesis on native or reconstituted 70S ribosomes in vitro. Probably functions indirectly by altering the affinity of the ribosome for aminoacyl-tRNA, thus increasing their reactivity as acceptors for peptidyl transferase. The sequence is that of Elongation factor P from Bartonella henselae (strain ATCC 49882 / DSM 28221 / CCUG 30454 / Houston 1) (Rochalimaea henselae).